Reading from the N-terminus, the 326-residue chain is 5-dehydro-2-deoxygluconokinase (326 aa).

This sequence belongs to the carbohydrate kinase PfkB family.

It catalyses the reaction 5-dehydro-2-deoxy-D-gluconate + ATP = 6-phospho-5-dehydro-2-deoxy-D-gluconate + ADP + H(+). It functions in the pathway polyol metabolism; myo-inositol degradation into acetyl-CoA; acetyl-CoA from myo-inositol: step 5/7. Functionally, catalyzes the phosphorylation of 5-dehydro-2-deoxy-D-gluconate (2-deoxy-5-keto-D-gluconate or DKG) to 6-phospho-5-dehydro-2-deoxy-D-gluconate (DKGP). In Shouchella clausii (strain KSM-K16) (Alkalihalobacillus clausii), this protein is 5-dehydro-2-deoxygluconokinase.